A 120-amino-acid chain; its full sequence is NAD(P)H-quinone oxidoreductase subunit 3, chloroplastic (120 aa).

3 helical membrane-spanning segments follow: residues tyrosine 7–isoleucine 27, methionine 64–methionine 84, and leucine 89–isoleucine 109.

The protein belongs to the complex I subunit 3 family. NDH is composed of at least 16 different subunits, 5 of which are encoded in the nucleus.

The protein localises to the plastid. It is found in the chloroplast thylakoid membrane. The enzyme catalyses a plastoquinone + NADH + (n+1) H(+)(in) = a plastoquinol + NAD(+) + n H(+)(out). It carries out the reaction a plastoquinone + NADPH + (n+1) H(+)(in) = a plastoquinol + NADP(+) + n H(+)(out). Its function is as follows. NDH shuttles electrons from NAD(P)H:plastoquinone, via FMN and iron-sulfur (Fe-S) centers, to quinones in the photosynthetic chain and possibly in a chloroplast respiratory chain. The immediate electron acceptor for the enzyme in this species is believed to be plastoquinone. Couples the redox reaction to proton translocation, and thus conserves the redox energy in a proton gradient. The chain is NAD(P)H-quinone oxidoreductase subunit 3, chloroplastic from Anthoceros angustus (Hornwort).